The sequence spans 557 residues: Hyaluronan synthase 3 (557 aa).

Topologically, residues 1–10 (MPGKFQTGLR) are cytoplasmic. Residues 11-31 (VLATCLFALLVLGGILVAYVT) traverse the membrane as a helical segment. Residues 32 to 44 (GYQFIHTDRHHLS) lie on the Extracellular side of the membrane. Residues 45 to 65 (FGLYGAILGLHLLSQSLFAFL) form a helical membrane-spanning segment. The Cytoplasmic segment spans residues 66–367 (EHRKMRGGGR…NALWFHKHHL (302 aa)). The helical transmembrane segment at 368–388 (WMTYESVVTGFFPFFLVATVV) threads the bilayer. Over 389–398 (QLFYRGRVWN) the chain is Extracellular. The helical transmembrane segment at 399–419 (ILLFLLTVQLVGILKATYACI) threads the bilayer. Over 420–430 (LRGNAEMIFMS) the chain is Cytoplasmic. The chain crosses the membrane as a helical span at residues 431 to 451 (LYSLLYMTSLLPAKIFAVITI). Topologically, residues 452–463 (KKSGWGTSGRRK) are extracellular. The helical transmembrane segment at 464-484 (LVVNFMGMVPVSVWFCILLGG) threads the bilayer. Residues 485–501 (LVYTAYCQSHDPFTETE) are Cytoplasmic-facing. A helical membrane pass occupies residues 502 to 522 (LLFLLTGAILYGCYWVALLSL). Residues 523–557 (YLALIARRCGKRQELYNLALEEVSEPEPAAKAIKP) are Extracellular-facing.

It belongs to the NodC/HAS family. The cofactor is Mg(2+). O-GlcNAcylation increases the hyaluronan synthase activity, HAS3 stability and its plasma membrane residence. The concentration of UDP-GlcNAc controls the level of O-GlcNAc modification.

It is found in the cell membrane. Its subcellular location is the golgi apparatus membrane. The protein localises to the golgi apparatus. It localises to the trans-Golgi network membrane. The protein resides in the cytoplasmic vesicle. The catalysed reaction is [hyaluronan](n) + UDP-N-acetyl-alpha-D-glucosamine = N-acetyl-beta-D-glucosaminyl-(1-&gt;4)-[hyaluronan](n) + UDP + H(+). The enzyme catalyses N-acetyl-beta-D-glucosaminyl-(1-&gt;4)-[hyaluronan](n) + UDP-alpha-D-glucuronate = [hyaluronan](n+1) + UDP + H(+). It participates in glycan biosynthesis; hyaluronan biosynthesis. In terms of biological role, catalyzes the addition of GlcNAc or GlcUA monosaccharides to the nascent hyaluronan polymer. Therefore, it is essential to hyaluronan synthesis a major component of most extracellular matrices that has a structural role in tissues architectures and regulates cell adhesion, migration and differentiation. This is one of three isoenzymes responsible for cellular hyaluronan synthesis. The polypeptide is Hyaluronan synthase 3 (has3) (Xenopus laevis (African clawed frog)).